The sequence spans 473 residues: Glycine--tRNA ligase (473 aa).

The substrate site is built by R101 and E172. Residues 204–206 (RNE), 214–219 (FRTREF), 289–290 (EL), and 333–336 (GVER) contribute to the ATP site. 219 to 223 (FEQME) provides a ligand contact to substrate. A substrate-binding site is contributed by 329-333 (EPSVG).

This sequence belongs to the class-II aminoacyl-tRNA synthetase family. As to quaternary structure, homodimer.

The protein localises to the cytoplasm. It carries out the reaction tRNA(Gly) + glycine + ATP = glycyl-tRNA(Gly) + AMP + diphosphate. In terms of biological role, catalyzes the attachment of glycine to tRNA(Gly). This chain is Glycine--tRNA ligase, found in Ureaplasma parvum serovar 3 (strain ATCC 27815 / 27 / NCTC 11736).